A 516-amino-acid polypeptide reads, in one-letter code: Serine carboxypeptidase-like 49 (516 aa).

An N-terminal signal peptide occupies residues 1–22 (MEKLTFLSLLLHFVVFIASTIP). Positions 23–82 (SSSFLLNDRTFERSNLPSTRAEKLIRELNLFPQQDLNVIDVADLPLTAAEGPGIVERKFV) are excised as a propeptide. 3 cysteine pairs are disulfide-bonded: Cys-139–Cys-379, Cys-307–Cys-322, and Cys-345–Cys-350. N-linked (GlcNAc...) asparagine glycosylation is present at Asn-157. Residue Ser-229 is part of the active site. Residue Asp-417 is part of the active site. Cys-420 is a binding site for substrate. Residue His-474 is part of the active site.

This sequence belongs to the peptidase S10 family. In terms of tissue distribution, expressed in roots, senescent leaves and flowers.

The protein localises to the secreted. Probable carboxypeptidase. In Arabidopsis thaliana (Mouse-ear cress), this protein is Serine carboxypeptidase-like 49 (SCPL49).